The sequence spans 1563 residues: Superkiller complex protein 3 (1563 aa).

Serine 2 bears the N-acetylserine mark. 22 TPR repeats span residues 6-39 (VKTA…EKNN), 40-73 (YNAW…EPEQ), 157-196 (YELW…ADNI), 272-305 (GPGL…SPVC), 307-339 (AGWC…IDNF), 386-419 (PGLL…YPDL), 420-453 (AEAH…DAEV), 455-492 (EYHY…DAHM), 493-527 (GKVF…DDND), 564-597 (KWAW…DPKD), 598-631 (CNCW…NPDS), 632-665 (TYSV…KEDY), 633-665 (YSVF…KEDY), 673-713 (GECH…RADV), 790-824 (VQHL…DSNN), 826-860 (LHWN…EQIN), 861-894 (AAAW…DPSY), 980-1013 (ASAF…LHSA), 1020-1053 (NVAV…ELED), 1055-1084 (IGFA…CKSE), 1325-1358 (KWSF…NPDQ), and 1399-1432 (VPAW…ASQQ).

This sequence belongs to the SKI3 family. As to quaternary structure, component of the SKI complex which consists of SKIC2, SKIC3 and SKIC8. Interacts with PAF1.

Its subcellular location is the cytoplasm. It is found in the nucleus. In terms of biological role, component of the SKI complex, a multiprotein complex that assists the RNA-degrading exosome during the mRNA decay and quality-control pathways. The SKI complex catalyzes mRNA extraction from 80S ribosomal complexes in the 3'-5' direction and channels mRNA to the cytosolic exosome for degradation. SKI-mediated extraction of mRNA from stalled ribosomes allow binding of the Pelota-HBS1L complex and subsequent ribosome disassembly by ABCE1 for ribosome recycling. In the nucleus, the SKI complex associates with transcriptionally active genes in a manner dependent on PAF1 complex (PAF1C). The polypeptide is Superkiller complex protein 3 (Mus musculus (Mouse)).